The primary structure comprises 424 residues: Virion nicking-joining enzyme (424 aa).

This sequence belongs to the orthopoxvirus OPG042 family.

It localises to the virion. DNA nicking enzyme that cleaves extruded cruciform DNA at its tip. Probably nicks viral hairpins. The chain is Virion nicking-joining enzyme (OPG042) from Cynomys gunnisoni (Gunnison's prairie dog).